The sequence spans 396 residues: S-adenosylmethionine synthase (396 aa).

His-16 serves as a coordination point for ATP. Residue Asp-18 participates in Mg(2+) binding. Glu-44 serves as a coordination point for K(+). Positions 57 and 100 each coordinate L-methionine. The interval 100 to 110 (QSVDIAQGVDR) is flexible loop. Residues 165 to 167 (DAK), Asp-240, 246 to 247 (RK), Ala-263, and Lys-267 contribute to the ATP site. Residue Asp-240 participates in L-methionine binding. Position 271 (Lys-271) interacts with L-methionine.

Belongs to the AdoMet synthase family. In terms of assembly, homotetramer; dimer of dimers. It depends on Mg(2+) as a cofactor. The cofactor is K(+).

It localises to the cytoplasm. It carries out the reaction L-methionine + ATP + H2O = S-adenosyl-L-methionine + phosphate + diphosphate. The protein operates within amino-acid biosynthesis; S-adenosyl-L-methionine biosynthesis; S-adenosyl-L-methionine from L-methionine: step 1/1. In terms of biological role, catalyzes the formation of S-adenosylmethionine (AdoMet) from methionine and ATP. The overall synthetic reaction is composed of two sequential steps, AdoMet formation and the subsequent tripolyphosphate hydrolysis which occurs prior to release of AdoMet from the enzyme. This Pseudomonas putida (strain W619) protein is S-adenosylmethionine synthase.